The sequence spans 185 residues: Threonylcarbamoyl-AMP synthase (185 aa).

In terms of domain architecture, YrdC-like spans 4 to 185 (SWRVQQAAQD…IATGQVMRAG (182 aa)).

This sequence belongs to the SUA5 family. TsaC subfamily.

It localises to the cytoplasm. It carries out the reaction L-threonine + hydrogencarbonate + ATP = L-threonylcarbamoyladenylate + diphosphate + H2O. In terms of biological role, required for the formation of a threonylcarbamoyl group on adenosine at position 37 (t(6)A37) in tRNAs that read codons beginning with adenine. Catalyzes the conversion of L-threonine, HCO(3)(-)/CO(2) and ATP to give threonylcarbamoyl-AMP (TC-AMP) as the acyladenylate intermediate, with the release of diphosphate. This is Threonylcarbamoyl-AMP synthase from Pseudomonas savastanoi pv. phaseolicola (strain 1448A / Race 6) (Pseudomonas syringae pv. phaseolicola (strain 1448A / Race 6)).